The primary structure comprises 151 residues: Putative pre-16S rRNA nuclease (151 aa).

It belongs to the YqgF nuclease family.

It localises to the cytoplasm. In terms of biological role, could be a nuclease involved in processing of the 5'-end of pre-16S rRNA. In Neisseria meningitidis serogroup B (strain ATCC BAA-335 / MC58), this protein is Putative pre-16S rRNA nuclease.